Reading from the N-terminus, the 109-residue chain is Small ribosomal subunit protein bS6 (109 aa).

This sequence belongs to the bacterial ribosomal protein bS6 family.

In terms of biological role, binds together with bS18 to 16S ribosomal RNA. In Dehalococcoides mccartyi (strain CBDB1), this protein is Small ribosomal subunit protein bS6.